The following is a 143-amino-acid chain: MSTVPSVQTFGKKKSATAVAHVKAGKGLIKVNGSPITLVEPEILRFKVYEPLLLVGLDKFANIDIRVRVTGGGHVSQVYAIRQAIAKGLVAYHQKFVDEQSKNELKKAFTSYDRTLLIADARRPEPKKFGGKGARARFQKSYR.

The interval 124–143 (PEPKKFGGKGARARFQKSYR) is disordered. Residues 134-143 (ARARFQKSYR) are compositionally biased toward basic residues.

This sequence belongs to the universal ribosomal protein uS9 family.

This is Small ribosomal subunit protein uS9 (RPS16) from Candida glabrata (strain ATCC 2001 / BCRC 20586 / JCM 3761 / NBRC 0622 / NRRL Y-65 / CBS 138) (Yeast).